A 156-amino-acid polypeptide reads, in one-letter code: Extracellular giant hemoglobin major globin subunit A1 (156 aa).

An N-terminal signal peptide occupies residues 1-16 (MKVLIIFACLVVMASA). A Globin domain is found at 17-156 (VCNRLEQILV…YERIASGISG (140 aa)). C18 and C146 are oxidised to a cystine. C79 is a binding site for hydrogen sulfide. Residue H110 coordinates heme b.

The protein belongs to the globin family. As to quaternary structure, the 400 kDa hemoglobin consists of a spherical 24-mer arranged as a double layer of dome-shaped dodecamers. Each dodecamer is composed of the 3-fold trimer of the tetramer A1-A2-B1-B2 having one intra-tetramer (A1-B2) disulfide bond and one inter-tetramer (B1-B2) disulfide bond per tetramer.

The protein resides in the secreted. Functionally, the extracellular giant hemoglobin is able to bind and transport oxygen and hydrosulfide simultaneously and reversibly at two different sites. The chain is Extracellular giant hemoglobin major globin subunit A1 (ghbA1) from Oligobrachia mashikoi (Beard worm).